Consider the following 484-residue polypeptide: Probable glycine dehydrogenase (decarboxylating) subunit 2 (484 aa).

Lys-264 carries the post-translational modification N6-(pyridoxal phosphate)lysine.

Belongs to the GcvP family. C-terminal subunit subfamily. In terms of assembly, the glycine cleavage system is composed of four proteins: P, T, L and H. In this organism, the P 'protein' is a heterodimer of two subunits. Requires pyridoxal 5'-phosphate as cofactor.

The enzyme catalyses N(6)-[(R)-lipoyl]-L-lysyl-[glycine-cleavage complex H protein] + glycine + H(+) = N(6)-[(R)-S(8)-aminomethyldihydrolipoyl]-L-lysyl-[glycine-cleavage complex H protein] + CO2. Its function is as follows. The glycine cleavage system catalyzes the degradation of glycine. The P protein binds the alpha-amino group of glycine through its pyridoxal phosphate cofactor; CO(2) is released and the remaining methylamine moiety is then transferred to the lipoamide cofactor of the H protein. In Legionella pneumophila (strain Lens), this protein is Probable glycine dehydrogenase (decarboxylating) subunit 2.